The chain runs to 521 residues: Manganese transporter pdt1 (521 aa).

Ser42 carries the phosphoserine modification. At Thr43 the chain carries Phosphothreonine. Helical transmembrane passes span 71 to 91 (YCKF…PGNY), 104 to 124 (KLLF…SLCI), 152 to 172 (VLAE…TAVA), 179 to 199 (IPLV…LIAW), 210 to 230 (IFET…AVVL), 233 to 253 (VHIG…TVFS), 260 to 280 (SIGI…SGLV), 325 to 345 (LFTF…AVFY), 373 to 393 (LFAV…TIAG), 417 to 437 (IAII…LNQV), 440 to 460 (ASQV…VMFT), and 495 to 515 (IVTW…IVWL).

Belongs to the NRAMP family.

It localises to the endoplasmic reticulum membrane. Its function is as follows. Transports manganese ions into the cell. Regulates cell morphogenesis through control of manganese homeostasis. The sequence is that of Manganese transporter pdt1 (pdt1) from Schizosaccharomyces pombe (strain 972 / ATCC 24843) (Fission yeast).